The primary structure comprises 248 residues: Pulmonary surfactant-associated protein A (248 aa).

An N-terminal signal peptide occupies residues 1–20 (MLLCSLTLTLLWMVASGLEC). Residues 28–100 (GSPGIPGTPG…PGERGPPGFP (73 aa)) enclose the Collagen-like domain. Residues 29-102 (SPGIPGTPGS…ERGPPGFPAY (74 aa)) are disordered. 4-hydroxyproline occurs at positions 30, 33, 36, 42, 54, 57, 63, 67, and 70. The segment covering 42-51 (PGRDGRDGIK) has biased composition (basic and acidic residues). Pro residues predominate over residues 54–65 (PGPPGPMGPPGG). Residues 69–82 (LPGRDGMTGAPGLP) are compositionally biased toward low complexity. A compositionally biased stretch (basic and acidic residues) spans 84–93 (ERGEKGEPGE). The 117-residue stretch at 132–248 (LAVGEKVFST…LQYRLAICEF (117 aa)) folds into the C-type lectin domain. Intrachain disulfides connect C155-C246 and C224-C238. A glycan (N-linked (GlcNAc...) asparagine) is linked at N207. 4 residues coordinate Ca(2+): E215, R217, N234, and D235.

Belongs to the SFTPA family. As to quaternary structure, oligomeric complex of 6 set of homotrimers.

Its subcellular location is the secreted. It localises to the extracellular space. The protein localises to the extracellular matrix. It is found in the surface film. In presence of calcium ions, it binds to surfactant phospholipids and contributes to lower the surface tension at the air-liquid interface in the alveoli of the mammalian lung and is essential for normal respiration. Enhances the expression of MYO18A/SP-R210 on alveolar macrophages. The chain is Pulmonary surfactant-associated protein A (SFTPA1) from Bos taurus (Bovine).